Reading from the N-terminus, the 321-residue chain is High osmolarity signaling protein SHO1A (321 aa).

The Cytoplasmic segment spans residues 1 to 28 (MDYNNNRYGGGGGGSKFNLGHIVGDPFS). A helical transmembrane segment spans residues 29-49 (LATIAIATAGWLIAFVSSIIA). Residues 50-58 (NIDQEYPNY) lie on the Extracellular side of the membrane. N-linked (GlcNAc...) asparagine glycosylation occurs at N57. Residues 59-79 (SWWALAYMFFVILGVTFAVAA) traverse the membrane as a helical segment. Residue N80 is a topological domain, cytoplasmic. Residues 81-101 (AVYTYHVAMVGFLAAGLVFTT) traverse the membrane as a helical segment. Residues 102-116 (SSVNSLIYWSDKAKQ) lie on the Extracellular side of the membrane. A helical membrane pass occupies residues 117–137 (AAAAGFILLSMVSIVWIFYFG). The Cytoplasmic segment spans residues 138-321 (SQPTASHRQT…IAPSNYLILL (184 aa)). Disordered stretches follow at residues 155 to 181 (KDHA…AQHP) and 194 to 261 (TSSP…QQPT). 2 stretches are compositionally biased toward polar residues: residues 165 to 181 (HMTQ…AQHP) and 225 to 237 (NFSN…PITS). Over residues 238–249 (QNNPQNQHQQPQ) the composition is skewed to low complexity. Polar residues predominate over residues 250–261 (DLTSPSTTQQPT). The 60-residue stretch at 262–321 (EYPYRAKAIYSYEANPDDANEISFNKHEILEVSDVSGRWWQAKKENGETGIAPSNYLILL) folds into the SH3 domain.

It belongs to the SHO1 family. In terms of assembly, forms homooligomers.

The protein resides in the cell membrane. Plasma membrane osmosensor that activates the high osmolarity glycerol (HOG) MAPK signaling pathway in response to high osmolarity. This is High osmolarity signaling protein SHO1A (SHO1A) from Hortaea werneckii.